A 211-amino-acid polypeptide reads, in one-letter code: Late expression factor 7 (211 aa).

In terms of biological role, involved in late/very late gene activation. The polypeptide is Late expression factor 7 (LEF-7) (Orgyia pseudotsugata multicapsid polyhedrosis virus (OpMNPV)).